Reading from the N-terminus, the 372-residue chain is Phospho-2-dehydro-3-deoxyheptonate aldolase, tyrosine-inhibited (372 aa).

It belongs to the class-I DAHP synthase family.

The protein resides in the cytoplasm. It is found in the nucleus. It carries out the reaction D-erythrose 4-phosphate + phosphoenolpyruvate + H2O = 7-phospho-2-dehydro-3-deoxy-D-arabino-heptonate + phosphate. It participates in metabolic intermediate biosynthesis; chorismate biosynthesis; chorismate from D-erythrose 4-phosphate and phosphoenolpyruvate: step 1/7. In terms of biological role, stereospecific condensation of phosphoenolpyruvate (PEP) and D-erythrose-4-phosphate (E4P) giving rise to 3-deoxy-D-arabino-heptulosonate-7-phosphate (DAHP). This chain is Phospho-2-dehydro-3-deoxyheptonate aldolase, tyrosine-inhibited (aro4), found in Schizosaccharomyces pombe (strain 972 / ATCC 24843) (Fission yeast).